A 401-amino-acid polypeptide reads, in one-letter code: MKEKIVLAYSGGLDTSVAVKWLLDKGYDVVACCLDVGEGKDLELVHQKALDMGAIECHIIDATEEFSQDYVSYAIKGNLMYEGTYPLVSALSRPLISKKLVEIASKTNSVGIAHGCTGKGNDQVRFEVAIKALDPELKVFAPVREWAWSREEEIDYAIKHNIPVPIQHDSPYSIDQNLWGRSNECGILEDPYATPPKDAYDLTNELEDAPDEAEEIVLSFEKGIPVSLDGTAYKLSELILELNKLAGKHGVGRIDHVENRLVGIKSREVYETPAAEVIMNAHKALETITLTKDVAHFKPVIEKQFSEQIYNGLWFSPLTDSLKIFVDSTQAHVTGDVRLKLYKGNAIVNGRQSPYTLYNEKLATYTKEDAFNQESAVGFIDIFGLPTKVNSMLHGGYKDEQ.

Residue 8–16 (AYSGGLDTS) coordinates ATP. Residue tyrosine 85 participates in L-citrulline binding. Glycine 115 provides a ligand contact to ATP. The L-aspartate site is built by threonine 117, asparagine 121, and aspartate 122. Position 121 (asparagine 121) interacts with L-citrulline. Residues arginine 125, serine 173, serine 182, glutamate 258, and tyrosine 270 each contribute to the L-citrulline site.

The protein belongs to the argininosuccinate synthase family. Type 1 subfamily. As to quaternary structure, homotetramer.

It is found in the cytoplasm. The enzyme catalyses L-citrulline + L-aspartate + ATP = 2-(N(omega)-L-arginino)succinate + AMP + diphosphate + H(+). The protein operates within amino-acid biosynthesis; L-arginine biosynthesis; L-arginine from L-ornithine and carbamoyl phosphate: step 2/3. This chain is Argininosuccinate synthase, found in Staphylococcus saprophyticus subsp. saprophyticus (strain ATCC 15305 / DSM 20229 / NCIMB 8711 / NCTC 7292 / S-41).